The following is a 306-amino-acid chain: Ribonuclease Z (306 aa).

7 residues coordinate Zn(2+): H61, H63, D65, H66, H137, D207, and H263. D65 functions as the Proton acceptor in the catalytic mechanism.

The protein belongs to the RNase Z family. In terms of assembly, homodimer. Zn(2+) is required as a cofactor.

The enzyme catalyses Endonucleolytic cleavage of RNA, removing extra 3' nucleotides from tRNA precursor, generating 3' termini of tRNAs. A 3'-hydroxy group is left at the tRNA terminus and a 5'-phosphoryl group is left at the trailer molecule.. Zinc phosphodiesterase, which displays some tRNA 3'-processing endonuclease activity. Probably involved in tRNA maturation, by removing a 3'-trailer from precursor tRNA. The protein is Ribonuclease Z of Thermococcus sibiricus (strain DSM 12597 / MM 739).